Consider the following 319-residue polypeptide: 1-aminocyclopropane-1-carboxylate oxidase 4 (319 aa).

One can recognise a Fe2OG dioxygenase domain in the interval 153-253 (PNFGTKVSNY…RMSLASFYNP (101 aa)). Residues histidine 177, aspartate 179, and histidine 234 each contribute to the Fe cation site.

This sequence belongs to the iron/ascorbate-dependent oxidoreductase family. It depends on Fe cation as a cofactor.

It carries out the reaction 1-aminocyclopropane-1-carboxylate + L-ascorbate + O2 = ethene + L-dehydroascorbate + hydrogen cyanide + CO2 + 2 H2O. It participates in alkene biosynthesis; ethylene biosynthesis via S-adenosyl-L-methionine; ethylene from S-adenosyl-L-methionine: step 2/2. In Petunia hybrida (Petunia), this protein is 1-aminocyclopropane-1-carboxylate oxidase 4 (ACO4).